The primary structure comprises 594 residues: 4-alpha-glucanotransferase DPE1, chloroplastic/amyloplastic (594 aa).

The transit peptide at 1-37 directs the protein to the chloroplast; it reads MATLSLPLPHLTQAIPARARPRPRPLRGIPARLLSCR.

The protein belongs to the disproportionating enzyme family.

It localises to the plastid. Its subcellular location is the chloroplast. It is found in the amyloplast. The enzyme catalyses Transfers a segment of a (1-&gt;4)-alpha-D-glucan to a new position in an acceptor, which may be glucose or a (1-&gt;4)-alpha-D-glucan.. Functionally, chloroplastic alpha-glucanotransferase involved in maltotriose metabolism. The polypeptide is 4-alpha-glucanotransferase DPE1, chloroplastic/amyloplastic (DPE1) (Oryza sativa subsp. japonica (Rice)).